Consider the following 152-residue polypeptide: 3-hydroxyacyl-[acyl-carrier-protein] dehydratase FabZ (152 aa).

Residue H57 is part of the active site.

The protein belongs to the thioester dehydratase family. FabZ subfamily.

It localises to the cytoplasm. It carries out the reaction a (3R)-hydroxyacyl-[ACP] = a (2E)-enoyl-[ACP] + H2O. Involved in unsaturated fatty acids biosynthesis. Catalyzes the dehydration of short chain beta-hydroxyacyl-ACPs and long chain saturated and unsaturated beta-hydroxyacyl-ACPs. The sequence is that of 3-hydroxyacyl-[acyl-carrier-protein] dehydratase FabZ from Bradyrhizobium sp. (strain ORS 278).